The sequence spans 346 residues: ATP-dependent (S)-NAD(P)H-hydrate dehydratase 2 (346 aa).

The disordered stretch occupies residues 1-20; sequence MMVHSPLATGPHPTTHLEPT. The 312-residue stretch at 28–339 folds into the YjeF C-terminal domain; it reads LLRKAFQMIP…GYIGEAFEQV (312 aa). (6S)-NADPHX is bound by residues glycine 135 and 188–194; that span reads NHVEFQR. Residues 228-232 and 248-257 each bind ATP; these read KGSID and GSPKRCGGQG. Residue aspartate 258 participates in (6S)-NADPHX binding.

This sequence belongs to the NnrD/CARKD family. Mg(2+) is required as a cofactor.

Its subcellular location is the cytoplasm. It carries out the reaction (6S)-NADHX + ATP = ADP + phosphate + NADH + H(+). The enzyme catalyses (6S)-NADPHX + ATP = ADP + phosphate + NADPH + H(+). Its function is as follows. Catalyzes the dehydration of the S-form of NAD(P)HX at the expense of ATP, which is converted to ADP. Together with NAD(P)HX epimerase, which catalyzes the epimerization of the S- and R-forms, the enzyme allows the repair of both epimers of NAD(P)HX, a damaged form of NAD(P)H that is a result of enzymatic or heat-dependent hydration. The chain is ATP-dependent (S)-NAD(P)H-hydrate dehydratase 2 from Puccinia graminis f. sp. tritici (strain CRL 75-36-700-3 / race SCCL) (Black stem rust fungus).